Consider the following 274-residue polypeptide: 2,3,4,5-tetrahydropyridine-2,6-dicarboxylate N-succinyltransferase (274 aa).

Substrate-binding residues include Arg-104 and Asp-141.

The protein belongs to the transferase hexapeptide repeat family. Homotrimer.

It is found in the cytoplasm. It carries out the reaction (S)-2,3,4,5-tetrahydrodipicolinate + succinyl-CoA + H2O = (S)-2-succinylamino-6-oxoheptanedioate + CoA. It functions in the pathway amino-acid biosynthesis; L-lysine biosynthesis via DAP pathway; LL-2,6-diaminopimelate from (S)-tetrahydrodipicolinate (succinylase route): step 1/3. The sequence is that of 2,3,4,5-tetrahydropyridine-2,6-dicarboxylate N-succinyltransferase from Shewanella sediminis (strain HAW-EB3).